Consider the following 270-residue polypeptide: NADPH-dependent aldehyde reductase-like protein, chloroplastic (270 aa).

The transit peptide at 1 to 53 (MSTHSSISQPPLPLAGRVAIVTGSSRGIGRAIAIHLAELGARIVINYTSKAAD) directs the protein to the chloroplast. 26-50 (RGIGRAIAIHLAELGARIVINYTSK) lines the NADP(+) pocket. S165 is a substrate binding site. The active-site Proton acceptor is Y178.

Belongs to the short-chain dehydrogenases/reductases (SDR) family.

Its subcellular location is the plastid. The protein resides in the chloroplast. Functionally, aldehyde reductase that catalyzes the reduction of the aldehyde carbonyl groups on saturated and alpha,beta-unsaturated aldehydes with more than 5 carbons. The chain is NADPH-dependent aldehyde reductase-like protein, chloroplastic from Arabidopsis thaliana (Mouse-ear cress).